Reading from the N-terminus, the 453-residue chain is MKETILEKIVKNKYEWIKFRKKKQPLITFKNHINTKTRNFYNSLKEKNPVFILECKKKSPSLGIIKKNFNLIDIAKIYNKYASAISVLTDEKYFDGKLEFINIVRERVSQPILCKDFFIDPFQIYLARYYNADAILLMLSILDDFQYQKLSKIAKELNMGILTEVNNTSELKRAIKLNANIIGINNRNLHDLSINLNRTRILSSLIPKNIIIISESGITKYKQIRYLSQFVNGFLIGSHLMSEKQLEIGVRSLILGENKICGLTRSCDIEIAEKYGAVYGGLIFAPSSLRKISKNTAKKIIFNNTLRNVGVFQNENIEIVKNIAEELNLYAVQLHGQEDQKYVKKLRQTLSINIQIWKAFSIDSKIPDLNWDHIHKYVLDSQFGGSNKCFNWSILKHQILENVILAGGINSNNCIKASKLNCSGLDLNSGIEVSPGIKDHKKIKSVFQKLRYY.

Residues 1 to 257 (MKETILEKIV…IGVRSLILGE (257 aa)) are indole-3-glycerol phosphate synthase. Positions 258 to 453 (NKICGLTRSC…KSVFQKLRYY (196 aa)) are N-(5'-phosphoribosyl)anthranilate isomerase.

This sequence in the N-terminal section; belongs to the TrpC family. In the C-terminal section; belongs to the TrpF family.

The enzyme catalyses N-(5-phospho-beta-D-ribosyl)anthranilate = 1-(2-carboxyphenylamino)-1-deoxy-D-ribulose 5-phosphate. The catalysed reaction is 1-(2-carboxyphenylamino)-1-deoxy-D-ribulose 5-phosphate + H(+) = (1S,2R)-1-C-(indol-3-yl)glycerol 3-phosphate + CO2 + H2O. It functions in the pathway amino-acid biosynthesis; L-tryptophan biosynthesis; L-tryptophan from chorismate: step 3/5. It participates in amino-acid biosynthesis; L-tryptophan biosynthesis; L-tryptophan from chorismate: step 4/5. Functionally, bifunctional enzyme that catalyzes two sequential steps of tryptophan biosynthetic pathway. The first reaction is catalyzed by the isomerase, coded by the TrpF domain; the second reaction is catalyzed by the synthase, coded by the TrpC domain. This is Tryptophan biosynthesis protein TrpCF (trpC) from Buchnera aphidicola subsp. Diuraphis noxia.